A 240-amino-acid chain; its full sequence is UDP-2,3-diacylglucosamine hydrolase (240 aa).

Residues D8, H10, D41, N79, and H114 each contribute to the Mn(2+) site. 79–80 (NR) provides a ligand contact to substrate. Positions 122, 160, 164, 167, and 195 each coordinate substrate. H195 and H197 together coordinate Mn(2+).

The protein belongs to the LpxH family. It depends on Mn(2+) as a cofactor.

The protein localises to the cell inner membrane. It carries out the reaction UDP-2-N,3-O-bis[(3R)-3-hydroxytetradecanoyl]-alpha-D-glucosamine + H2O = 2-N,3-O-bis[(3R)-3-hydroxytetradecanoyl]-alpha-D-glucosaminyl 1-phosphate + UMP + 2 H(+). It functions in the pathway glycolipid biosynthesis; lipid IV(A) biosynthesis; lipid IV(A) from (3R)-3-hydroxytetradecanoyl-[acyl-carrier-protein] and UDP-N-acetyl-alpha-D-glucosamine: step 4/6. In terms of biological role, hydrolyzes the pyrophosphate bond of UDP-2,3-diacylglucosamine to yield 2,3-diacylglucosamine 1-phosphate (lipid X) and UMP by catalyzing the attack of water at the alpha-P atom. Involved in the biosynthesis of lipid A, a phosphorylated glycolipid that anchors the lipopolysaccharide to the outer membrane of the cell. In Pectobacterium atrosepticum (strain SCRI 1043 / ATCC BAA-672) (Erwinia carotovora subsp. atroseptica), this protein is UDP-2,3-diacylglucosamine hydrolase.